Reading from the N-terminus, the 365-residue chain is Tetraacyldisaccharide 4'-kinase (365 aa).

68 to 75 (VVGGAGKT) lines the ATP pocket.

It belongs to the LpxK family.

The catalysed reaction is a lipid A disaccharide + ATP = a lipid IVA + ADP + H(+). It participates in glycolipid biosynthesis; lipid IV(A) biosynthesis; lipid IV(A) from (3R)-3-hydroxytetradecanoyl-[acyl-carrier-protein] and UDP-N-acetyl-alpha-D-glucosamine: step 6/6. Its function is as follows. Transfers the gamma-phosphate of ATP to the 4'-position of a tetraacyldisaccharide 1-phosphate intermediate (termed DS-1-P) to form tetraacyldisaccharide 1,4'-bis-phosphate (lipid IVA). This is Tetraacyldisaccharide 4'-kinase from Chlamydia pneumoniae (Chlamydophila pneumoniae).